The chain runs to 207 residues: Large ribosomal subunit protein uL4 (207 aa).

The tract at residues 52–77 (RGWADVSGGGRKPWRQKGTGRARAGS) is disordered.

This sequence belongs to the universal ribosomal protein uL4 family. Part of the 50S ribosomal subunit.

Its function is as follows. One of the primary rRNA binding proteins, this protein initially binds near the 5'-end of the 23S rRNA. It is important during the early stages of 50S assembly. It makes multiple contacts with different domains of the 23S rRNA in the assembled 50S subunit and ribosome. Forms part of the polypeptide exit tunnel. This Moorella thermoacetica (strain ATCC 39073 / JCM 9320) protein is Large ribosomal subunit protein uL4.